The following is a 298-amino-acid chain: Urease accessory protein UreD 3 (298 aa).

The disordered stretch occupies residues 1–30; the sequence is MADEAGTRSAGGRPIPAAEPLRPALSRQRS.

This sequence belongs to the UreD family. In terms of assembly, ureD, UreF and UreG form a complex that acts as a GTP-hydrolysis-dependent molecular chaperone, activating the urease apoprotein by helping to assemble the nickel containing metallocenter of UreC. The UreE protein probably delivers the nickel.

It is found in the cytoplasm. Functionally, required for maturation of urease via the functional incorporation of the urease nickel metallocenter. This is Urease accessory protein UreD 3 from Methylorubrum extorquens (strain PA1) (Methylobacterium extorquens).